The sequence spans 875 residues: Probable inorganic carbon transporter subunit DabA (875 aa).

4 residues coordinate Zn(2+): cysteine 380, aspartate 382, histidine 563, and cysteine 578.

This sequence belongs to the inorganic carbon transporter (TC 9.A.2) DabA family. In terms of assembly, forms a complex with DabB. Requires Zn(2+) as cofactor.

It localises to the cell membrane. Its function is as follows. Part of an energy-coupled inorganic carbon pump. This is Probable inorganic carbon transporter subunit DabA from Geobacillus thermodenitrificans (strain NG80-2).